Consider the following 225-residue polypeptide: NAD(P)H-quinone oxidoreductase subunit K, chloroplastic (225 aa).

4 residues coordinate [4Fe-4S] cluster: Cys43, Cys44, Cys108, and Cys139.

It belongs to the complex I 20 kDa subunit family. In terms of assembly, NDH is composed of at least 16 different subunits, 5 of which are encoded in the nucleus. [4Fe-4S] cluster serves as cofactor.

It is found in the plastid. The protein localises to the chloroplast thylakoid membrane. The catalysed reaction is a plastoquinone + NADH + (n+1) H(+)(in) = a plastoquinol + NAD(+) + n H(+)(out). The enzyme catalyses a plastoquinone + NADPH + (n+1) H(+)(in) = a plastoquinol + NADP(+) + n H(+)(out). Its function is as follows. NDH shuttles electrons from NAD(P)H:plastoquinone, via FMN and iron-sulfur (Fe-S) centers, to quinones in the photosynthetic chain and possibly in a chloroplast respiratory chain. The immediate electron acceptor for the enzyme in this species is believed to be plastoquinone. Couples the redox reaction to proton translocation, and thus conserves the redox energy in a proton gradient. This is NAD(P)H-quinone oxidoreductase subunit K, chloroplastic from Triticum aestivum (Wheat).